The following is a 311-amino-acid chain: Methionyl-tRNA formyltransferase (311 aa).

117 to 120 contributes to the (6S)-5,6,7,8-tetrahydrofolate binding site; sequence SLLP.

The protein belongs to the Fmt family.

The enzyme catalyses L-methionyl-tRNA(fMet) + (6R)-10-formyltetrahydrofolate = N-formyl-L-methionyl-tRNA(fMet) + (6S)-5,6,7,8-tetrahydrofolate + H(+). Functionally, attaches a formyl group to the free amino group of methionyl-tRNA(fMet). The formyl group appears to play a dual role in the initiator identity of N-formylmethionyl-tRNA by promoting its recognition by IF2 and preventing the misappropriation of this tRNA by the elongation apparatus. This chain is Methionyl-tRNA formyltransferase, found in Bordetella avium (strain 197N).